Here is a 408-residue protein sequence, read N- to C-terminus: Peptidase T (408 aa).

His-79 is a Zn(2+) binding site. Asp-81 is an active-site residue. Asp-139 contributes to the Zn(2+) binding site. Catalysis depends on Glu-173, which acts as the Proton acceptor. Glu-174, Asp-196, and His-378 together coordinate Zn(2+).

It belongs to the peptidase M20B family. It depends on Zn(2+) as a cofactor.

It is found in the cytoplasm. It carries out the reaction Release of the N-terminal residue from a tripeptide.. Its function is as follows. Cleaves the N-terminal amino acid of tripeptides. The polypeptide is Peptidase T (Shouchella clausii (strain KSM-K16) (Alkalihalobacillus clausii)).